A 198-amino-acid polypeptide reads, in one-letter code: MICOS complex subunit MIC26 (198 aa).

A signal peptide spans 1-25 (MFKVIQRSVGPASLSLLTFKVYAAP). Residues 108–128 (PGFFPRLGVIGFAGLIGLLLA) traverse the membrane as a helical segment. O-linked (Xyl...) (chondroitin sulfate) serine glycosylation occurs at S162.

The protein belongs to the apolipoprotein O/MICOS complex subunit Mic27 family. In terms of assembly, component of the mitochondrial contact site and cristae organizing system (MICOS) complex, composed of at least MICOS10/MIC10, CHCHD3/MIC19, CHCHD6/MIC25, APOOL/MIC27, IMMT/MIC60, APOO/MIC23/MIC26 and MICOS13/MIC13. This complex was also known under the names MINOS or MitOS complex. he MICOS complex associates with mitochondrial outer membrane proteins SAMM50, MTX1 and MTX2 (together described as components of the mitochondrial outer membrane sorting assembly machinery (SAM) complex) and DNAJC11, mitochondrial inner membrane protein TMEM11 and with HSPA9. The MICOS and SAM complexes together with DNAJC11 are part of a large protein complex spanning both membranes termed the mitochondrial intermembrane space bridging (MIB) complex. Interacts with IMMT/MIC60. Interacts with MICOS10/MIC10 and APOOL/MIC27. O-glycosylation; glycosaminoglycan of chondroitin-sulfate type. Expressed in all tissues examined. Up-regulated in diabetic heart.

It is found in the mitochondrion inner membrane. It localises to the secreted. Its subcellular location is the mitochondrion. The protein localises to the golgi apparatus membrane. The protein resides in the endoplasmic reticulum membrane. Functionally, component of the MICOS complex, a large protein complex of the mitochondrial inner membrane that plays crucial roles in the maintenance of crista junctions, inner membrane architecture, and formation of contact sites to the outer membrane. Plays a crucial role in crista junction formation and mitochondrial function. Can promote cardiac lipotoxicity by enhancing mitochondrial respiration and fatty acid metabolism in cardiac myoblasts. Promotes cholesterol efflux from macrophage cells. Detected in HDL, LDL and VLDL. Secreted by a microsomal triglyceride transfer protein (MTTP)-dependent mechanism, probably as a VLDL-associated protein that is subsequently transferred to HDL. The sequence is that of MICOS complex subunit MIC26 (APOO) from Homo sapiens (Human).